Reading from the N-terminus, the 369-residue chain is 2-aminoethylphosphonate--pyruvate transaminase (369 aa).

N6-(pyridoxal phosphate)lysine is present on Lys-193.

This sequence belongs to the class-V pyridoxal-phosphate-dependent aminotransferase family. PhnW subfamily. In terms of assembly, homodimer. Requires pyridoxal 5'-phosphate as cofactor.

The enzyme catalyses (2-aminoethyl)phosphonate + pyruvate = phosphonoacetaldehyde + L-alanine. In terms of biological role, involved in phosphonate degradation. The sequence is that of 2-aminoethylphosphonate--pyruvate transaminase from Burkholderia pseudomallei (strain 1106a).